Reading from the N-terminus, the 162-residue chain is Phosphopantetheine adenylyltransferase (162 aa).

A substrate-binding site is contributed by Thr10. Residues 10–11 and His18 each bind ATP; that span reads TF. 3 residues coordinate substrate: Lys42, Leu74, and Arg88. ATP contacts are provided by residues 89 to 91, Glu99, and 124 to 130; these read GLR and FSCISST.

It belongs to the bacterial CoaD family. Homohexamer. It depends on Mg(2+) as a cofactor.

It is found in the cytoplasm. It catalyses the reaction (R)-4'-phosphopantetheine + ATP + H(+) = 3'-dephospho-CoA + diphosphate. The protein operates within cofactor biosynthesis; coenzyme A biosynthesis; CoA from (R)-pantothenate: step 4/5. In terms of biological role, reversibly transfers an adenylyl group from ATP to 4'-phosphopantetheine, yielding dephospho-CoA (dPCoA) and pyrophosphate. This Francisella tularensis subsp. novicida (strain U112) protein is Phosphopantetheine adenylyltransferase.